The sequence spans 192 residues: Ribosome maturation factor RimP (192 aa).

This sequence belongs to the RimP family.

It is found in the cytoplasm. Its function is as follows. Required for maturation of 30S ribosomal subunits. The chain is Ribosome maturation factor RimP from Delftia acidovorans (strain DSM 14801 / SPH-1).